Here is a 313-residue protein sequence, read N- to C-terminus: Homoserine O-succinyltransferase (313 aa).

C142 (acyl-thioester intermediate) is an active-site residue. 2 residues coordinate substrate: K163 and S192. The Proton acceptor role is filled by H235. The active site involves E237. Position 249 (R249) interacts with substrate.

Belongs to the MetA family.

The protein localises to the cytoplasm. The catalysed reaction is L-homoserine + succinyl-CoA = O-succinyl-L-homoserine + CoA. Its pathway is amino-acid biosynthesis; L-methionine biosynthesis via de novo pathway; O-succinyl-L-homoserine from L-homoserine: step 1/1. In terms of biological role, transfers a succinyl group from succinyl-CoA to L-homoserine, forming succinyl-L-homoserine. This Aliivibrio fischeri (strain MJ11) (Vibrio fischeri) protein is Homoserine O-succinyltransferase.